The sequence spans 422 residues: Mitochondrial distribution and morphology protein 12 (422 aa).

The SMP-LTD domain maps to 1-386; it reads MSFDINWNQL…WPSWICIDMN (386 aa). 2 disordered regions span residues 74–134 and 387–422; these read GATN…HDLG and DDGDDDDDDEVEDSNVSDGDGKDNDGKHGDGPTHEV. Acidic residues-rich tracts occupy residues 109 to 130 and 387 to 401; these read FDDDDDDDEGVDEDDDDDEYDD and DDGDDDDDDEVEDSN. Over residues 405 to 422 the composition is skewed to basic and acidic residues; it reads GDGKDNDGKHGDGPTHEV.

This sequence belongs to the MDM12 family. As to quaternary structure, component of the ER-mitochondria encounter structure (ERMES) or MDM complex, composed of MMM1, MDM10, MDM12 and MDM34. An MMM1 homodimer associates with one molecule of MDM12 on each side in a pairwise head-to-tail manner, and the SMP-LTD domains of MMM1 and MDM12 generate a continuous hydrophobic tunnel for phospholipid trafficking.

The protein localises to the mitochondrion outer membrane. The protein resides in the endoplasmic reticulum membrane. In terms of biological role, component of the ERMES/MDM complex, which serves as a molecular tether to connect the endoplasmic reticulum (ER) and mitochondria. Components of this complex are involved in the control of mitochondrial shape and protein biogenesis, and function in nonvesicular lipid trafficking between the ER and mitochondria. MDM12 is required for the interaction of the ER-resident membrane protein MMM1 and the outer mitochondrial membrane-resident beta-barrel protein MDM10. The MDM12-MMM1 subcomplex functions in the major beta-barrel assembly pathway that is responsible for biogenesis of all mitochondrial outer membrane beta-barrel proteins, and acts in a late step after the SAM complex. The MDM10-MDM12-MMM1 subcomplex further acts in the TOM40-specific pathway after the action of the MDM12-MMM1 complex. Essential for establishing and maintaining the structure of mitochondria and maintenance of mtDNA nucleoids. The sequence is that of Mitochondrial distribution and morphology protein 12 from Candida dubliniensis (strain CD36 / ATCC MYA-646 / CBS 7987 / NCPF 3949 / NRRL Y-17841) (Yeast).